Consider the following 500-residue polypeptide: Glycerol kinase (500 aa).

Residue threonine 13 participates in ADP binding. 3 residues coordinate ATP: threonine 13, threonine 14, and serine 15. Threonine 13 contributes to the sn-glycerol 3-phosphate binding site. Arginine 17 provides a ligand contact to ADP. 4 residues coordinate sn-glycerol 3-phosphate: arginine 83, glutamate 84, tyrosine 135, and aspartate 245. Positions 83, 84, 135, 245, and 246 each coordinate glycerol. ADP contacts are provided by threonine 267 and glycine 310. ATP contacts are provided by threonine 267, glycine 310, glutamine 314, and glycine 411. ADP is bound by residues glycine 411 and asparagine 415.

It belongs to the FGGY kinase family. As to quaternary structure, homotetramer and homodimer (in equilibrium).

The enzyme catalyses glycerol + ATP = sn-glycerol 3-phosphate + ADP + H(+). Its pathway is polyol metabolism; glycerol degradation via glycerol kinase pathway; sn-glycerol 3-phosphate from glycerol: step 1/1. Its activity is regulated as follows. Activated by phosphorylation and inhibited by fructose 1,6-bisphosphate (FBP). Functionally, key enzyme in the regulation of glycerol uptake and metabolism. Catalyzes the phosphorylation of glycerol to yield sn-glycerol 3-phosphate. The chain is Glycerol kinase from Carboxydothermus hydrogenoformans (strain ATCC BAA-161 / DSM 6008 / Z-2901).